A 224-amino-acid chain; its full sequence is Inhibitor of apoptosis protein (224 aa).

The stretch at 29–92 (VDARNQSFAI…AFWSRNCGFM (64 aa)) is one BIR repeat. Zn(2+) is bound by residues Cys62, Cys65, His82, and Cys89.

It belongs to the asfivirus IAP family. In terms of assembly, interacts with subunit p17 of host CASP3.

The protein resides in the host cytoplasm. It localises to the virion. Functionally, prevents apoptosis of host cell by inhibiting caspase-3/CASP3 activation to promote the viral replication. Also induces the activation of host NF-kappaB. In African swine fever virus (isolate Tick/South Africa/Wildebeeslaagte M1/1996) (ASFV), this protein is Inhibitor of apoptosis protein (p27).